A 219-amino-acid chain; its full sequence is Probable oxidoreductase virH (219 aa).

This sequence belongs to the oxidoreductase OpS7 family.

It participates in secondary metabolite biosynthesis. Probable oxidoreductase; part of the gene cluster that mediates the biosynthesis of virensols and trichoxide, fungal natural products that contain or are derived from a salicylaldehyde core. The pathway begins with the synthesis of the reduced chain in virensol C by the highly reducing polyketide synthase virA via condensation of one acetate and 8 malonate units. VirA has interesting programming rules since the first 2 ketides are fully reduced, the 3 following ketides undergo beta-dehydration, and the last 3 ketides are only reduced to beta-hydroxys to yield the trihydroxy portion. The production of aldehyde virensol C by virA alone is surprising, since virA does not contain a reductase (R) domain that is typically associated with reductive product release in HRPKS. The cupin-domain enzyme virC is involved in enhancing virA product turnover. The short-chain dehydrogenase virB then oxidizes the C-7 alcohol of virensol C to a ketone, yielding virensol D. Virensol D is further transformed to salicylaldehyde 5-deoxyaurocitrin by the short-chain dehydrogenase virD. VirD catalyzes the dehydrogenation of C-3 to form the beta-ketone aldehyde, which is followed by the generation of the nucleophilic C-2 that is required for the intramolecular aldol condensation between C-2 and C-7, itself followed by dehydration and aromatization which leads to salicylaldehyde 5-deoxyaurocitrin. While the dehydrogenation of virensol D is definitely catalyzed by virD, the aldol condensation and dehydration may be uncatalyzed or assisted by virD. The short chain dehydrogenase virG then converts salicylaldehyde 5-deoxyaurocitrin into virensol B which is further hydroxylated by the cytochrome P450 monooxygenase virE to yield the hydroquinone virensol A. VirI then may oxidize virensol A to form the quinone, while virH performs the epoxidation. Finally, the two remaining short-chain dehydrogenases, virK and virL, are probably responsible for reducing the ketones to the corresponding alcohols to furnish the epoxycyclohexanol structure in trichoxide. The protein is Probable oxidoreductase virH of Hypocrea virens (strain Gv29-8 / FGSC 10586) (Gliocladium virens).